The chain runs to 231 residues: MPVKLAQALANSLFPELDSQLRAGRHIGIDDLDNHAYLMDFQEQLEEFYARYNVELIRAPEGFFYLRPRSTTLIPRSVLSELDMMVGKILCYLYLSPERLANQGIFTAQELYEELISLADEGKLMKFVNQRSSGSDLDKQKLQEKVRTTLNRLRRLGMVYILPNDNNKFTITEAVFRFGADVRSGDDPREVQLRMIRDGEAMPIEGGLSLDDSENDETSDNSAEGTGDEQP.

The segment at 197–231 (RDGEAMPIEGGLSLDDSENDETSDNSAEGTGDEQP) is disordered.

Belongs to the MukE family. As to quaternary structure, interacts, and probably forms a ternary complex, with MukF and MukB. The complex formation is stimulated by calcium or magnesium.

Its subcellular location is the cytoplasm. It is found in the nucleoid. In terms of biological role, involved in chromosome condensation, segregation and cell cycle progression. May participate in facilitating chromosome segregation by condensation DNA from both sides of a centrally located replisome during cell division. Probably acts via its interaction with MukB and MukF. The protein is Chromosome partition protein MukE of Photorhabdus laumondii subsp. laumondii (strain DSM 15139 / CIP 105565 / TT01) (Photorhabdus luminescens subsp. laumondii).